The chain runs to 221 residues: Ribonuclease 3 (221 aa).

Residues 1–123 (MERTGHAFAD…LIAVLYLDGG (123 aa)) form the RNase III domain. Glu-36 provides a ligand contact to Mg(2+). Asp-40 is an active-site residue. Positions 109 and 112 each coordinate Mg(2+). Glu-112 is a catalytic residue. The 70-residue stretch at 148 to 217 (DAKTELQEWA…AAALLLREGV (70 aa)) folds into the DRBM domain.

Belongs to the ribonuclease III family. As to quaternary structure, homodimer. The cofactor is Mg(2+).

It is found in the cytoplasm. The enzyme catalyses Endonucleolytic cleavage to 5'-phosphomonoester.. Digests double-stranded RNA. Involved in the processing of primary rRNA transcript to yield the immediate precursors to the large and small rRNAs (23S and 16S). Processes some mRNAs, and tRNAs when they are encoded in the rRNA operon. Processes pre-crRNA and tracrRNA of type II CRISPR loci if present in the organism. The chain is Ribonuclease 3 from Mesorhizobium japonicum (strain LMG 29417 / CECT 9101 / MAFF 303099) (Mesorhizobium loti (strain MAFF 303099)).